Reading from the N-terminus, the 385-residue chain is Na(+)/H(+) antiporter NhaA (385 aa).

A run of 11 helical transmembrane segments spans residues 9-29 (YSAI…NVLD), 45-65 (IFGL…VFFF), 87-107 (IIPG…YLSV), 114-134 (GWPV…AIFG), 155-175 (AGIV…WIIV), 198-218 (TFLI…SVYQ), 220-235 (GIHA…IMLN), 245-265 (ALEP…AAMV), 282-302 (ILLG…IIAL), 312-332 (FFNL…SLLM), and 345-365 (QGVI…IILM).

The protein belongs to the NhaA Na(+)/H(+) (TC 2.A.33) antiporter family.

Its subcellular location is the cell membrane. The catalysed reaction is Na(+)(in) + 2 H(+)(out) = Na(+)(out) + 2 H(+)(in). Functionally, na(+)/H(+) antiporter that extrudes sodium in exchange for external protons. In Tropheryma whipplei (strain TW08/27) (Whipple's bacillus), this protein is Na(+)/H(+) antiporter NhaA.